The following is a 3033-amino-acid chain: Genome polyprotein (3033 aa).

Residue Ser-2 is modified to N-acetylserine; by host. The segment at 2–23 is interaction with STAT1; sequence STNPKPQRKTKRNTNRRPQDVK. An interaction with EIF2AK2/PKR region spans residues 2 to 58; the sequence is STNPKPQRKTKRNTNRRPQDVKFPGGGQIVGGVYLLPRRGPRLGVRATRKTSERSQP. Residues 2–59 form an interaction with DDX3X region; the sequence is STNPKPQRKTKRNTNRRPQDVKFPGGGQIVGGVYLLPRRGPRLGVRATRKTSERSQPR. Residues 2–75 are disordered; that stretch reads STNPKPQRKT…PKDRRSAGKS (74 aa). The Cytoplasmic segment spans residues 2–168; sequence STNPKPQRKT…EDGINYATGN (167 aa). 2 consecutive short sequence motifs (nuclear localization signal) follow at residues 5 to 13 and 38 to 43; these read PKPQRKTKR and PRRGPR. Positions 7–16 are enriched in basic residues; the sequence is PQRKTKRNTN. The segment covering 32–47 has biased composition (low complexity); sequence GGVYLLPRRGPRLGVR. At Ser-53 the chain carries Phosphoserine; by host. 2 short sequence motifs (nuclear localization signal) span residues 58–64 and 66–71; these read PRGRRQP and PKDRRS. Phosphoserine; by host occurs at positions 99 and 116. The segment at 112-152 is important for endoplasmic reticulum and mitochondrial localization; it reads PRHRSRNLGKVIDTLTCGFADLMGYIPVVGAPVGGVARALA. Residues 122-173 are interaction with APOA2; sequence VIDTLTCGFADLMGYIPVVGAPVGGVARALAHGVRVLEDGINYATGNLPGCS. Positions 164–167 are important for lipid droplets localization; that stretch reads YATG. A helical transmembrane segment spans residues 169–189; the sequence is LPGCSFSIFLLALLSCMSVPV. Residues 178–191 constitute a propeptide, ER anchor for the core protein, removed in mature form by host signal peptidase; the sequence is LLALLSCMSVPVSA. Residues 190–358 are Lumenal-facing; that stretch reads SAVEVKNTSQ…TGAHWGVMFG (169 aa). Residues Asn-196, Asn-209, and Asn-234 are each glycosylated (N-linked (GlcNAc...) asparagine; by host). The tract at residues 265 to 296 is important for fusion; that stretch reads IVVSATFCSALYIGDVCGAIMIAAQATIISPQ. A glycan (N-linked (GlcNAc...) asparagine; by host) is linked at Asn-305. The helical transmembrane segment at 359–379 threads the bilayer; it reads LAYFSMQGAWAKVVVILLLTA. Over 380-729 the chain is Lumenal; sequence GVDAQTHTIS…WEWVVLLFLL (350 aa). An HVR1 region spans residues 385-412; sequence THTISGHAARTTHGLVSLFTPGSQQNIQ. N-linked (GlcNAc...) (high mannose) asparagine; by host glycosylation is found at Asn-417, Asn-423, and Asn-430. 4 disulfide bridges follow: Cys-429–Cys-554, Cys-452–Cys-459, Cys-488–Cys-496, and Cys-505–Cys-510. Asn-448 is a glycosylation site (N-linked (GlcNAc...) asparagine; by host). The interval 475-480 is HVR2; sequence EENVTN. A glycan (N-linked (GlcNAc...) asparagine; by host) is linked at Asn-477. The CD81-binding 1 stretch occupies residues 482-495; sequence DNMRPYCWHYPPRP. The N-linked (GlcNAc...) asparagine; by host glycan is linked to Asn-534. Residues 546 to 553 form a CD81-binding 2 region; that stretch reads PPRGAWFG. A glycan (N-linked (GlcNAc...) asparagine; by host) is linked at Asn-558. 4 disulfides stabilise this stretch: Cys-566/Cys-571, Cys-585/Cys-589, Cys-601/Cys-624, and Cys-611/Cys-648. Residues Asn-627 and Asn-649 are each glycosylated (N-linked (GlcNAc...) (high mannose) asparagine; by host). Cys-656 and Cys-681 form a disulfide bridge. Residues 664–675 are PKR/eIF2-alpha phosphorylation homology domain (PePHD); the sequence is SQLSPLLHSTTE. Residues 730-750 form a helical membrane-spanning segment; it reads LADARVCACLWMLLLLGQAEA. Topologically, residues 751–761 are lumenal; sequence ALEKLVILHAA. A helical transmembrane segment spans residues 762–782; that stretch reads SAASSHGMLCFIIFFIAAWYI. Topologically, residues 783–786 are cytoplasmic; the sequence is KGRV. A helical transmembrane segment spans residues 787–807; that stretch reads TPLVTYSYLGMWSFSLLLLAL. At 808-817 the chain is on the lumenal side; it reads PQQAYALDTT. The helical transmembrane segment at 818 to 838 threads the bilayer; it reads EQGQIGLVLLVVISVFTLSPA. Residues 839-885 lie on the Cytoplasmic side of the membrane; the sequence is YKILLCRSLWWLSYLLVRAEALIQDWVPPWQARGGRDGIIWAATIFC. The chain crosses the membrane as a helical span at residues 886–906; that stretch reads PGVLFDITNWLLAILGPGYLL. Residues 903–1030 form the Peptidase C18 domain; the sequence is GYLLRSVLTS…EYTSKGWKLL (128 aa). Over 907-932 the chain is Lumenal; sequence RSVLTSTPYFVRAQALLRICAAVRHL. The interval 908-1210 is protease NS2-3; it reads SVLTSTPYFV…PIESLDVIIR (303 aa). The S-palmitoyl cysteine; by host moiety is linked to residue Cys-926. Residues 933 to 953 form a helical membrane-spanning segment; that stretch reads SGGKYVQMMLLTLGKWTGTYI. The interval 933-953 is interaction with host SCPS1; it reads SGGKYVQMMLLTLGKWTGTYI. Residues 954 to 1661 lie on the Cytoplasmic side of the membrane; it reads YDHLSPMSGW…CMQADLEIMT (708 aa). Residues His-956, Glu-976, and Cys-997 each act as for protease NS2 activity; shared with dimeric partner in the active site. The Peptidase S29 domain occupies 1031-1212; it reads APITAYAQQT…ESLDVIIRSP (182 aa). Residues His-1087 and Asp-1111 each act as charge relay system; for serine protease NS3 activity in the active site. 2 residues coordinate Zn(2+): Cys-1127 and Cys-1129. Residue Ser-1169 is the Charge relay system; for serine protease NS3 activity of the active site. Zn(2+)-binding residues include Cys-1175 and His-1179. The Helicase ATP-binding domain occupies 1221–1373; that stretch reads PAVPQTYQVG…PNIEEVALGH (153 aa). 1234–1241 provides a ligand contact to ATP; it reads APTGSGKS. Residues Ser-1241 and Glu-1321 each contribute to the Mg(2+) site. The DECH box motif lies at 1320–1323; it reads DECH. The interval 1490–1502 is RNA-binding; that stretch reads QRRGRTGRGRLGI. Residues 1662-1682 form a helical membrane-spanning segment; it reads STWVLAGGVLAAIAAYCLATG. The interval 1683 to 1694 is NS3-binding; the sequence is CVVCIGRVNINQ. Over 1683 to 1809 the chain is Cytoplasmic; it reads CVVCIGRVNI…ALTSPLPTST (127 aa). Residues 1810–1830 form a helical membrane-spanning segment; it reads TILLNIMGGWLASQIAPAAGA. Residues 1831-1832 lie on the Lumenal side of the membrane; sequence TG. The helical transmembrane segment at 1833–1853 threads the bilayer; the sequence is FVVSGLVGAAVGSIGLGKILV. Position 1854 (Asp-1854) is a topological domain, cytoplasmic. Residues 1855-1875 traverse the membrane as a helical segment; that stretch reads VLAGYGAGISGALVAFKIMSG. Over 1876-1885 the chain is Lumenal; the sequence is EKPSVEDVVN. The chain crosses the membrane as a helical span at residues 1886–1906; that stretch reads LLPGILSPGALVVGVICAAIL. Residues 1907-1976 are Cytoplasmic-facing; that stretch reads RRHVGQGEGA…WITEDCPVPC (70 aa). Cys-1976 carries S-palmitoyl cysteine; by host lipidation. Residues 1977–2007 lie within the membrane without spanning it; the sequence is AGSWLRDIWDWACTILTDFKNWLSTKLLPKM. Residues 2008 to 3012 lie on the Cytoplasmic side of the membrane; that stretch reads PGLPFISCQR…YHSVSRARPR (1005 aa). Residues Cys-2015, Cys-2033, Cys-2035, and Cys-2056 each coordinate Zn(2+). An FKBP8-binding region spans residues 2124-2212; sequence EFFSWVDGVQ…ASSSASQLSA (89 aa). The transcriptional activation stretch occupies residues 2124-2332; that stretch reads EFFSWVDGVQ…PTPPPRRRRA (209 aa). The tract at residues 2139–2143 is interaction with non-structural protein 4A; the sequence is PTPKP. A disordered region spans residues 2193–2212; that stretch reads RLARGSPPSEASSSASQLSA. The interaction with host SKP2 stretch occupies residues 2193–2460; it reads RLARGSPPSE…ALITPCGPEE (268 aa). Phosphoserine; by host occurs at positions 2198, 2201, 2205, 2208, 2211, and 2214. A compositionally biased stretch (low complexity) spans 2198-2212; it reads SPPSEASSSASQLSA. The segment at 2214–2249 is ISDR; that stretch reads SLRATCTAHAKNYAVEMVDANFFMGSDVTRIESETK. Positions 2214–2275 are interaction with EIF2AK2/PKR; the sequence is SLRATCTAHA…REPSVPSEYL (62 aa). The NS4B-binding stretch occupies residues 2249-2306; that stretch reads KVLILDSLDPSVEEEDEREPSVPSEYLLPKKKFPQALPVWARPDYNPPVVETWKRPDY. The interval 2299–2376 is V3; it reads ETWKRPDYDP…MDTTDATDQP (78 aa). The disordered stretch occupies residues 2308-2328; sequence PPTVSGCALPPRVTAPTPPPR. The SH3-binding signature appears at 2322–2325; that stretch reads APTP. The Nuclear localization signal signature appears at 2327-2335; sequence PRRRRALVL. Lys-2350 participates in a covalent cross-link: Glycyl lysine isopeptide (Lys-Gly) (interchain with G-Cter in ubiquitin). The interval 2353–2431 is disordered; that stretch reads GQLPPSCDSG…PDLDSGSWST (79 aa). Over residues 2361–2373 the composition is skewed to polar residues; it reads SGRSTGMDTTDAT. Phosphoserine; by host is present on residues Ser-2471 and Ser-2484. The RdRp catalytic domain maps to 2656-2774; it reads PMGFSYDTRC…ISESQGAEED (119 aa). Positions 2662, 2760, and 2761 each coordinate Mg(2+). Residues 3013–3033 form a helical membrane-spanning segment; the sequence is FLLLCLLLLSVGVGIFLLPAR.

This sequence belongs to the hepacivirus polyprotein family. Homooligomer. Interacts with E1 (via C-terminus). Interacts with the non-structural protein 5A. Interacts (via N-terminus) with host STAT1 (via SH2 domain); this interaction results in decreased STAT1 phosphorylation and ubiquitin-mediated proteasome-dependent STAT1 degradation, leading to decreased IFN-stimulated gene transcription. Interacts with host STAT3; this interaction constitutively activates STAT3. Interacts with host LTBR receptor. Interacts with host TNFRSF1A receptor and possibly induces apoptosis. Interacts with host HNRPK. Interacts with host YWHAE. Interacts with host UBE3A/E6AP. Interacts with host DDX3X. Interacts with host APOA2. Interacts with host RXRA protein. Interacts with host SP110 isoform 3/Sp110b; this interaction sequesters the transcriptional corepressor SP110 away from the nucleus. Interacts with host CREB3 nuclear transcription protein; this interaction triggers cell transformation. Interacts with host ACY3. Interacts with host C1QR1. Interacts with host RBM24; this interaction, which enhances the interaction of the mature core protein with 5'-UTR, may inhibit viral translation and favor replication. Interacts with host EIF2AK2/PKR; this interaction induces the autophosphorylation of EIF2AK2. Part of the viral assembly initiation complex composed of NS2, E1, E2, NS3, NS4A, NS5A and the mature core protein. In terms of assembly, forms a heterodimer with envelope glycoprotein E2. Interacts with mature core protein. Interacts with protease NS2. The heterodimer E1/E2 interacts with host CLDN1; this interaction plays a role in viral entry into host cell. Interacts with host SPSB2 (via C-terminus). Part of the viral assembly initiation complex composed of NS2, E1, E2, NS3, NS4A, NS5A and the mature core protein. Interacts with host NEURL3; this interaction prevents E1 binding to glycoprotein E2. As to quaternary structure, forms a heterodimer with envelope glycoprotein E1. Interacts with host CD81 and SCARB1 receptors; these interactions play a role in viral entry into host cell. Interacts with host EIF2AK2/PKR; this interaction inhibits EIF2AK2 and probably allows the virus to evade the innate immune response. Interacts with host CD209/DC-SIGN and CLEC4M/DC-SIGNR. Interact with host SPCS1; this interaction is essential for viral particle assembly. Interacts with protease NS2. The heterodimer E1/E2 interacts with host CLDN1; this interaction plays a role in viral entry into host cell. Part of the viral assembly initiation complex composed of NS2, E1, E2, NS3, NS4A, NS5A and the mature core protein. Interacts with host SLC3A2/4F2hc; the interaction may facilitate viral entry into host cell. Interacts with human PLSCR1. Homohexamer. Homoheptamer. Interacts with protease NS2. In terms of assembly, homodimer. Interacts with host SPCS1; this interaction is essential for viral particle assembly. Interacts with envelope glycoprotein E1. Interacts with envelope glycoprotein E2. Interacts with viroporin p7. Interacts with serine protease/helicase NS3. Part of the replication complex composed of NS2, NS3, NS4A, NS4B, NS5A and the RNA-directed RNA polymerase embedded in an ER-derived membranous web. Part of the viral assembly initiation complex composed of NS2, E1, E2, NS3, NS4A, NS5A and the mature core protein. As to quaternary structure, interacts with protease NS2. Interacts with non-structural protein 4A; this interaction stabilizes the folding of NS3 serine protease. NS3-NS4A interaction is essential for NS3 activation and allows membrane anchorage of the latter. NS3/NS4A complex also prevents phosphorylation of host IRF3, thus preventing the establishment of dsRNA induced antiviral state. Interacts with host MAVS; this interaction leads to the cleavage and inhibition of host MAVS. Interacts with host TICAM1; this interaction leads to the cleavage and inhibition of host TICAM1. Interacts with host TANK-binding kinase/TBK1; this interaction results in the inhibition of the association between TBK1 and IRF3, which leads to the inhibition of IRF3 activation. Interacts with host RBM24. Part of the replication complex composed of NS2, NS3, NS4A, NS4B, NS5A and the RNA-directed RNA polymerase embedded in an ER-derived membranous web. Part of the viral assembly initiation complex composed of NS2, E1, E2, NS3, NS4A, NS5A and the mature core protein. Interacts with NS3 serine protease; this interaction stabilizes the folding of NS3 serine protease. NS3-NS4A interaction is essential for NS3 activation and allows membrane anchorage of the latter. Interacts with non-structural protein 5A (via N-terminus). Part of the replication complex composed of NS2, NS3, NS4A, NS4B, NS5A and the RNA-directed RNA polymerase embedded in an ER-derived membranous web. Part of the viral assembly initiation complex composed of NS2, E1, E2, NS3, NS4A, NS5A and the mature core protein. In terms of assembly, homomultimer. Interacts with non-structural protein NS5A. Interacts with host PLA2G4C; this interaction likely initiates the recruitment of replication complexes to lipid droplets. Interacts with host STING; this interaction disrupts the interaction between STING and TBK1 thereby suppressing the interferon signaling. Part of the replication complex composed of NS2, NS3, NS4A, NS4B, NS5A and the RNA-directed RNA polymerase embedded in an ER-derived membranous web. As to quaternary structure, monomer. Homodimer; dimerization is required for RNA-binding. Interacts with the mature core protein. Interacts (via N-terminus) with non-structural protein 4A. Interacts with non-structural protein 4B. Interacts (via region D2) with RNA-directed RNA polymerase. Part of the viral assembly initiation complex composed of NS2, E1, E2, NS3, NS4A, NS5A and the mature core protein. Part of the replication complex composed of NS2, NS3, NS4A, NS4B, NS5A and the RNA-directed RNA polymerase embedded in an ER-derived membranous web. Interacts with host GRB2. Interacts with host BIN1. Interacts with host PIK3R1. Interacts with host SRCAP. Interacts with host FKBP8. Interacts (via C-terminus) with host VAPB (via MSP domain). Interacts with host EIF2AK2/PKR; this interaction leads to disruption of EIF2AK2 dimerization by NS5A and probably allows the virus to evade the innate immune response. Interacts (via N-terminus) with host PACSIN2 (via N-terminus); this interaction attenuates protein kinase C alpha-mediated phosphorylation of PACSIN2 by disrupting the interaction between PACSIN2 and PRKCA. Interacts (via N-terminus) with host SRC kinase (via SH2 domain). Interacts with most Src-family kinases. Interacts with host IFI27 and SKP2; promotes the ubiquitin-mediated proteasomal degradation of NS5A. Interacts with host GPS2. Interacts with host TNFRSF21; this interaction allows the modulation by the virus of JNK, p38 MAPK, STAT3, and Akt signaling pathways in a DR6-dependent manner. Interacts (via N-terminus) with host CIDEB (via N-terminus); this interaction seems to regulate the association of HCV particles with APOE. Interacts with host CHKA/Choline Kinase-alpha; CHKA bridges host PI4KA and NS5A and potentiates NS5A-stimulated PI4KA activity, which then facilitates the targeting of the ternary complex to the ER for viral replication. Interacts with host SPSB2 (via C-terminus); this interaction targets NS5A for ubiquitination and degradation. Interacts with host RAB18; this interaction may promote the association of NS5A and other replicase components with lipid droplets. Interacts (via region D2) with host PPIA/CYPA; the interaction stimulates RNA-binding ability of NS5A and is dependent on the peptidyl-prolyl cis-trans isomerase activity of PPIA/CYPA. Interacts with host TRIM14; this interaction induces the degradation of NS5A. Homooligomer. Interacts with non-structural protein 5A. Interacts with host VAPB. Interacts with host PRK2/PKN2. Interacts with host HNRNPA1 and SEPT6; these interactions facilitate viral replication. Part of the replication complex composed of NS2, NS3, NS4A, NS4B, NS5A and the RNA-directed RNA polymerase. It depends on Zn(2+) as a cofactor. Requires Mg(2+) as cofactor. Post-translationally, specific enzymatic cleavages in vivo yield mature proteins. The structural proteins, core, E1, E2 and p7 are produced by proteolytic processing by host signal peptidases. The core protein precursor is synthesized as a 23 kDa, which is retained in the ER membrane through the hydrophobic signal peptide. Cleavage by the signal peptidase releases the 21 kDa mature core protein. The cleavage of the core protein precursor occurs between aminoacids 176 and 188 but the exact cleavage site is not known. Some degraded forms of the core protein appear as well during the course of infection. The other proteins (p7, NS2, NS3, NS4A, NS4B, NS5A and NS5B) are cleaved by the viral proteases. Autoprocessing between NS2 and NS3 is mediated by the NS2 cysteine protease catalytic domain and regulated by the NS3 N-terminal domain. In terms of processing, phosphorylated by host PKC and PKA. Ubiquitinated; mediated by UBE3A and leading to core protein subsequent proteasomal degradation. Post-translationally, highly N-glycosylated. In terms of processing, palmitoylation is required for NS2/3 autoprocessing and E2 recruitment to membranes. Palmitoylated. This modification may play a role in its polymerization or in protein-protein interactions. Post-translationally, phosphorylated on serines in a basal form termed p56. p58 is a hyperphosphorylated form of p56. p56 and p58 coexist in the cell in roughly equivalent amounts. Hyperphosphorylation is dependent on the presence of NS4A. Host CSNK1A1/CKI-alpha or RPS6KB1 kinases may be responsible for NS5A phosphorylation. In terms of processing, tyrosine phosphorylation is essential for the interaction with host SRC. Ubiquitinated. Ubiquitination, most probably at Lys-2350, mediated by host IFI27 and SKP2 leads to proteasomal degradation, restricting viral infection. Ubiquitination by host TRIM22 leads to interruption of viral replication. Post-translationally, the N-terminus is phosphorylated by host PRK2/PKN2.

The protein localises to the host endoplasmic reticulum membrane. Its subcellular location is the host mitochondrion membrane. It localises to the virion. The protein resides in the host cytoplasm. It is found in the host nucleus. The protein localises to the host lipid droplet. Its subcellular location is the virion membrane. It localises to the host mitochondrion. The protein resides in the host cell membrane. It is found in the host perinuclear region. It carries out the reaction Hydrolysis of four peptide bonds in the viral precursor polyprotein, commonly with Asp or Glu in the P6 position, Cys or Thr in P1 and Ser or Ala in P1'.. The catalysed reaction is a ribonucleoside 5'-triphosphate + H2O = a ribonucleoside 5'-diphosphate + phosphate + H(+). It catalyses the reaction ATP + H2O = ADP + phosphate + H(+). The enzyme catalyses RNA(n) + a ribonucleoside 5'-triphosphate = RNA(n+1) + diphosphate. With respect to regulation, inhibited by the antiviral drug hexamethylene amiloride. Inhibition by amantadine appears to be genotype-dependent. Also inhibited by long-alkyl-chain iminosugar derivatives. Activity is up-regulated by PRK2/PKN2-mediated phosphorylation. Functionally, packages viral RNA to form a viral nucleocapsid, and promotes virion budding. Participates in the viral particle production as a result of its interaction with the non-structural protein 5A. Binds RNA and may function as a RNA chaperone to induce the RNA structural rearrangements taking place during virus replication. Modulates viral translation initiation by interacting with viral IRES and 40S ribosomal subunit. Affects various cell signaling pathways, host immunity and lipid metabolism. Prevents the establishment of cellular antiviral state by blocking the interferon-alpha/beta (IFN-alpha/beta) and IFN-gamma signaling pathways and by blocking the formation of phosphorylated STAT1 and promoting ubiquitin-mediated proteasome-dependent degradation of STAT1. Activates STAT3 leading to cellular transformation. Regulates the activity of cellular genes, including c-myc and c-fos. May repress the promoter of p53, and sequester CREB3 and SP110 isoform 3/Sp110b in the cytoplasm. Represses cell cycle negative regulating factor CDKN1A, thereby interrupting an important check point of normal cell cycle regulation. Targets transcription factors involved in the regulation of inflammatory responses and in the immune response: suppresses TNF-induced NF-kappa-B activation, and activates AP-1. Binds to dendritic cells (DCs) via C1QR1, resulting in down-regulation of T-lymphocytes proliferation. Alters lipid metabolism by interacting with hepatocellular proteins involved in lipid accumulation and storage. Induces up-regulation of FAS promoter activity, and thereby contributes to the increased triglyceride accumulation in hepatocytes (steatosis). Its function is as follows. Forms a heterodimer with envelope glycoprotein E2, which mediates virus attachment to the host cell, virion internalization through clathrin-dependent endocytosis and fusion with host membrane. Fusion with the host cell is most likely mediated by both E1 and E2, through conformational rearrangements of the heterodimer required for fusion rather than a classical class II fusion mechanism. E1/E2 heterodimer binds host apolipoproteins such as APOB and ApoE thereby forming a lipo-viro-particle (LVP). APOE associated to the LVP allows the initial virus attachment to cell surface receptors such as the heparan sulfate proteoglycans (HSPGs), syndecan-1 (SDC1), syndecan-1 (SDC2), the low-density lipoprotein receptor (LDLR) and scavenger receptor class B type I (SCARB1). The cholesterol transfer activity of SCARB1 allows E2 exposure and binding of E2 to SCARB1 and the tetraspanin CD81. E1/E2 heterodimer binding on CD81 activates the epithelial growth factor receptor (EGFR) signaling pathway. Diffusion of the complex E1-E2-EGFR-SCARB1-CD81 to the cell lateral membrane allows further interaction with Claudin 1 (CLDN1) and occludin (OCLN) to finally trigger HCV entry. Forms a heterodimer with envelope glycoprotein E1, which mediates virus attachment to the host cell, virion internalization through clathrin-dependent endocytosis and fusion with host membrane. Fusion with the host cell is most likely mediated by both E1 and E2, through conformational rearrangements of the heterodimer required for fusion rather than a classical class II fusion mechanism. The interaction between envelope glycoprotein E2 and host apolipoprotein E/APOE allows the proper assembly, maturation and infectivity of the viral particles. This interaction is probably promoted via the up-regulation of cellular autophagy by the virus. E1/E2 heterodimer binds host apolipoproteins such as APOB and APOE thereby forming a lipo-viro-particle (LVP). APOE associated to the LVP allows the initial virus attachment to cell surface receptors such as the heparan sulfate proteoglycans (HSPGs), syndecan-1 (SDC1), syndecan-1 (SDC2), the low-density lipoprotein receptor (LDLR) and scavenger receptor class B type I (SCARB1). The cholesterol transfer activity of SCARB1 allows E2 exposure and binding of E2 to SCARB1 and the tetraspanin CD81. E1/E2 heterodimer binding on CD81 activates the epithelial growth factor receptor (EGFR) signaling pathway. Diffusion of the complex E1-E2-EGFR-SCARB1-CD81 to the cell lateral membrane allows further interaction with Claudin 1 (CLDN1) and occludin (OCLN) to finally trigger HCV entry. Inhibits host EIF2AK2/PKR activation, preventing the establishment of an antiviral state. Viral ligand for CD209/DC-SIGN and CLEC4M/DC-SIGNR, which are respectively found on dendritic cells (DCs), and on liver sinusoidal endothelial cells and macrophage-like cells of lymph node sinuses. These interactions allow the capture of circulating HCV particles by these cells and subsequent facilitated transmission to permissive cells such as hepatocytes and lymphocyte subpopulations. The interaction between E2 and host amino acid transporter complex formed by SLC3A2 and SLC7A5/LAT1 may facilitate viral entry into host cell. In terms of biological role, ion channel protein that acts as a viroporin and plays an essential role in the assembly, envelopment and secretion of viral particles. Regulates the host cell secretory pathway, which induces the intracellular retention of viral glycoproteins and favors assembly of viral particles. Creates a pore in acidic organelles and releases Ca(2+) and H(+) in the cytoplasm of infected cells, leading to a productive viral infection. High levels of cytoplasmic Ca(2+) may trigger membrane trafficking and transport of viral ER-associated proteins to viroplasms, sites of viral genome replication. This ionic imbalance induces the assembly of the inflammasome complex, which triggers the maturation of pro-IL-1beta into IL-1beta through the action of caspase-1. Targets also host mitochondria and induces mitochondrial depolarization. In addition of its role as a viroporin, acts as a lipid raft adhesion factor. Functionally, cysteine protease required for the proteolytic auto-cleavage between the non-structural proteins NS2 and NS3. The N-terminus of NS3 is required for the function of NS2 protease (active region NS2-3). Promotes the initiation of viral particle assembly by mediating the interaction between structural and non-structural proteins. Its function is as follows. Displays three enzymatic activities: serine protease with a chymotrypsin-like fold, NTPase and RNA helicase. NS3 serine protease, in association with NS4A, is responsible for the cleavages of NS3-NS4A, NS4A-NS4B, NS4B-NS5A and NS5A-NS5B. The NS3/NS4A complex prevents phosphorylation of host IRF3, thus preventing the establishment of dsRNA induced antiviral state. The NS3/NS4A complex induces host amino acid transporter component SLC3A2, thus contributing to HCV propagation. NS3 RNA helicase binds to RNA and unwinds both dsDNA and dsRNA in the 3' to 5' direction, and likely resolves RNA complicated stable secondary structures in the template strand. Binds a single ATP and catalyzes the unzipping of a single base pair of dsRNA. Inhibits host antiviral proteins TBK1 and IRF3 thereby preventing the establishment of an antiviral state. Cleaves host MAVS/CARDIF thereby preventing the establishment of an antiviral state. Cleaves host TICAM1/TRIF, thereby disrupting TLR3 signaling and preventing the establishment of an antiviral state. Peptide cofactor which forms a non-covalent complex with the N-terminal of NS3 serine protease. The NS3/NS4A complex prevents phosphorylation of host IRF3, thus preventing the establishment of dsRNA induced antiviral state. The NS3/NS4A complex induces host amino acid transporter component SLC3A2, thus contributing to HCV propagation. In terms of biological role, induces a specific membrane alteration that serves as a scaffold for the virus replication complex. This membrane alteration gives rise to the so-called ER-derived membranous web that contains the replication complex. NS4B self-interaction contributes to its function in membranous web formation. Promotes host TRIF protein degradation in a CASP8-dependent manner thereby inhibiting host TLR3-mediated interferon signaling. Disrupts the interaction between STING and TBK1 contributing to the inhibition of interferon signaling. Functionally, phosphorylated protein that is indispensable for viral replication and assembly. Both hypo- and hyperphosphorylated states are required for the viral life cycle. The hyperphosphorylated form of NS5A is an inhibitor of viral replication. Involved in RNA-binding and especially in binding to the viral genome. Zinc is essential for RNA-binding. Participates in the viral particle production as a result of its interaction with the mature viral core protein. Its interaction with host VAPB may target the viral replication complex to vesicles. Down-regulates viral IRES translation initiation. Mediates interferon resistance, presumably by interacting with and inhibiting host EIF2AK2/PKR. Prevents BIN1-induced apoptosis. Acts as a transcriptional activator of some host genes important for viral replication when localized in the nucleus. Via the interaction with host PACSIN2, modulates lipid droplet formation in order to promote virion assembly. Modulates TNFRSF21/DR6 signaling pathway for viral propagation. Its function is as follows. RNA-dependent RNA polymerase that performs primer-template recognition and RNA synthesis during viral replication. Initiates RNA transcription/replication at a flavin adenine dinucleotide (FAD), resulting in a 5'- FAD cap on viral RNAs. In this way, recognition of viral 5' RNA by host pattern recognition receptors can be bypassed, thereby evading activation of antiviral pathways. This is Genome polyprotein from Hepatitis C virus genotype 2k (isolate VAT96) (HCV).